The chain runs to 199 residues: Casparian strip membrane protein 1 (199 aa).

Over 1 to 37 (MKSESAAIDIPESSSVAKGKAPLIAVSRNEKGGYRKG) the chain is Cytoplasmic. Residues 38–58 (IAIFDFILRLAAIATALAAAA) traverse the membrane as a helical segment. The Extracellular portion of the chain corresponds to 59–87 (AMGTSDETLPFFTQFFQFQASYDDLPTFQ). The helical transmembrane segment at 88-108 (FFVIAIAIVGGYLVLSLPFSI) threads the bilayer. Residues 109–120 (VAIVRPHAVGPR) are Cytoplasmic-facing. The chain crosses the membrane as a helical span at residues 121–141 (LLLIILDAVALTLNTAAGAAA). Topologically, residues 142 to 173 (AAIVYLAHNGNSNTNWLAICQQYGDFCQKVSG) are extracellular. A helical transmembrane segment spans residues 174–194 (AVVASFITVVIFVFLIVLSAF). Residues 195–199 (ALRRH) lie on the Cytoplasmic side of the membrane.

Belongs to the Casparian strip membrane proteins (CASP) family. As to quaternary structure, homodimer and heterodimers.

It is found in the cell membrane. Regulates membrane-cell wall junctions and localized cell wall deposition. Required for establishment of the Casparian strip membrane domain (CSD) and the subsequent formation of Casparian strips, a cell wall modification of the root endodermis that determines an apoplastic barrier between the intraorganismal apoplasm and the extraorganismal apoplasm and prevents lateral diffusion. The protein is Casparian strip membrane protein 1 of Populus trichocarpa (Western balsam poplar).